Here is a 153-residue protein sequence, read N- to C-terminus: Myoglobin (153 aa).

In terms of domain architecture, Globin spans 1–147 (MATACVKSLE…FSDECLDHLK (147 aa)). Residue histidine 94 participates in heme b binding.

Belongs to the globin family. Homodimer; disulfide-linked. Post-translationally, the N-terminus is blocked. Body wall globin is localized in cellular compartments belonging to the hypodermis, the dorsal, ventral and lateral cords, the nerve ring, and body wall muscle.

The protein resides in the cytoplasm. Its function is as follows. High oxygen affinity. Probably supplies oxygen needed for muscle activity. This chain is Myoglobin, found in Ascaris suum (Pig roundworm).